The following is a 347-amino-acid chain: NADH-ubiquinone oxidoreductase chain 2 (347 aa).

Helical transmembrane passes span 1 to 21 (MNPS…MMVI), 25 to 45 (HWLL…PIMM), 59 to 79 (YLLT…INLM), 96 to 116 (TLMT…FWVP), 122 to 142 (IPLT…LSIL), 149 to 169 (INLY…GWGG), 200 to 220 (LTLL…MLFI), 239 to 259 (IITT…PLSG), 274 to 294 (DILI…YFYM), and 325 to 345 (LLPT…MLSI).

It belongs to the complex I subunit 2 family. Core subunit of respiratory chain NADH dehydrogenase (Complex I) which is composed of 45 different subunits. Interacts with TMEM242.

It is found in the mitochondrion inner membrane. The enzyme catalyses a ubiquinone + NADH + 5 H(+)(in) = a ubiquinol + NAD(+) + 4 H(+)(out). Core subunit of the mitochondrial membrane respiratory chain NADH dehydrogenase (Complex I) which catalyzes electron transfer from NADH through the respiratory chain, using ubiquinone as an electron acceptor. Essential for the catalytic activity and assembly of complex I. This is NADH-ubiquinone oxidoreductase chain 2 from Balaenoptera musculus (Blue whale).